A 494-amino-acid polypeptide reads, in one-letter code: Serine/arginine-rich splicing factor 4 (494 aa).

The 71-residue stretch at 2–72 (PRVYIGRLSY…ERVIVEHARG (71 aa)) folds into the RRM 1 domain. 2 disordered regions span residues 72–95 (GPRR…GRDK) and 169–494 (KIRL…HSRS). Ser-78 and Ser-84 each carry phosphoserine. The RRM 2 domain maps to 104–177 (YRLIVENLSS…RKIRLVEDKP (74 aa)). Basic residues-rich tracts occupy residues 179–206 (SRRR…KSRS) and 214–246 (SHSK…KKEK). Residues 247–256 (SRSPSKEKSR) show a composition bias toward basic and acidic residues. Positions 257-267 (SRSHSAGKSRS) are enriched in basic residues. Over residues 268-278 (KSKDQAEEKIQ) the composition is skewed to basic and acidic residues. Residues 286 to 302 (PKSRSPSRHKSKSKSRS) show a composition bias toward basic residues. Ser-288, Ser-290, and Ser-292 each carry phosphoserine. The span at 303-327 (RSQERRVEEEKRGSVSRGRSQEKSL) shows a compositional bias: basic and acidic residues. Basic residues-rich tracts occupy residues 328–359 (RQSR…GRKR) and 367–382 (RSRS…KRGS). Residues 411–431 (VSKEREHAKSESSQREGRGES) are compositionally biased toward basic and acidic residues. Phosphoserine occurs at positions 431, 446, 456, 458, and 460. The segment covering 449 to 460 (KSKPNLPSESRS) has biased composition (low complexity). The segment covering 461–494 (RSKSASKTRSRSKSRSRSASRSPSRSRSRSHSRS) has biased composition (basic residues).

This sequence belongs to the splicing factor SR family. In terms of assembly, found in a pre-mRNA splicing complex with SRSF4/SFRS4, SRSF5/SFRS5, SNRNP70, SNRPA1, SRRM1 and SRRM2. Interacts with PNN. In terms of processing, extensively phosphorylated on serine residues in the RS domain.

It localises to the nucleus speckle. Plays a role in alternative splice site selection during pre-mRNA splicing. Represses the splicing of MAPT/Tau exon 10. This chain is Serine/arginine-rich splicing factor 4 (SRSF4), found in Homo sapiens (Human).